Here is a 253-residue protein sequence, read N- to C-terminus: 5'/3'-nucleotidase SurE (253 aa).

A divalent metal cation contacts are provided by Asp8, Asp9, Ser39, and Asn92.

It belongs to the SurE nucleotidase family. The cofactor is a divalent metal cation.

It is found in the cytoplasm. It catalyses the reaction a ribonucleoside 5'-phosphate + H2O = a ribonucleoside + phosphate. The catalysed reaction is a ribonucleoside 3'-phosphate + H2O = a ribonucleoside + phosphate. It carries out the reaction [phosphate](n) + H2O = [phosphate](n-1) + phosphate + H(+). Its function is as follows. Nucleotidase with a broad substrate specificity as it can dephosphorylate various ribo- and deoxyribonucleoside 5'-monophosphates and ribonucleoside 3'-monophosphates with highest affinity to 3'-AMP. Also hydrolyzes polyphosphate (exopolyphosphatase activity) with the preference for short-chain-length substrates (P20-25). Might be involved in the regulation of dNTP and NTP pools, and in the turnover of 3'-mononucleotides produced by numerous intracellular RNases (T1, T2, and F) during the degradation of various RNAs. The sequence is that of 5'/3'-nucleotidase SurE from Enterobacter sp. (strain 638).